The sequence spans 381 residues: Homoserine O-acetyltransferase (381 aa).

The 313-residue stretch at 47–359 (NAILICHALT…DKGHDAFLLD (313 aa)) folds into the AB hydrolase-1 domain. Ser-153 (nucleophile) is an active-site residue. Arg-223 serves as a coordination point for substrate. Residues Asp-320 and His-353 contribute to the active site. Asp-354 provides a ligand contact to substrate.

This sequence belongs to the AB hydrolase superfamily. MetX family. In terms of assembly, homodimer.

Its subcellular location is the cytoplasm. It carries out the reaction L-homoserine + acetyl-CoA = O-acetyl-L-homoserine + CoA. The protein operates within amino-acid biosynthesis; L-methionine biosynthesis via de novo pathway; O-acetyl-L-homoserine from L-homoserine: step 1/1. Transfers an acetyl group from acetyl-CoA to L-homoserine, forming acetyl-L-homoserine. The polypeptide is Homoserine O-acetyltransferase (Acidiphilium cryptum (strain JF-5)).